The following is a 453-amino-acid chain: Anthocyanidin 3-O-glucosyltransferase (453 aa).

Catalysis depends on His-17, which acts as the Proton acceptor. His-17 is a binding site for an anthocyanidin. Residue Asp-117 is the Charge relay of the active site. Thr-139 is a UDP-alpha-D-glucose binding site. His-148 provides a ligand contact to an anthocyanidin. Positions 331, 333, 348, 351, 352, 353, and 356 each coordinate UDP-alpha-D-glucose. Residue Gly-371 participates in an anthocyanidin binding. Residues Asp-372 and Gln-373 each coordinate UDP-alpha-D-glucose.

It belongs to the UDP-glycosyltransferase family.

The enzyme catalyses an anthocyanidin + UDP-alpha-D-glucose + H(+) = an anthocyanidin 3-O-beta-D-glucoside + UDP. It catalyses the reaction delphinidin + UDP-alpha-D-glucose = delphinidin 3-O-beta-D-glucoside + UDP. It carries out the reaction pelargonidin + UDP-alpha-D-glucose = pelargonidin 3-O-beta-D-glucoside + UDP. The catalysed reaction is cyanidin + UDP-alpha-D-glucose = cyanidin 3-O-beta-D-glucoside + UDP + H(+). It participates in pigment biosynthesis; anthocyanin biosynthesis. Its function is as follows. In the presence of other necessary color factors, this glycosylation reaction allows the accumulation of anthocyanin pigments. Anthocyanidins are the preferred substrates, while flavonols are only a minor substrate in vitro. This chain is Anthocyanidin 3-O-glucosyltransferase, found in Gentiana triflora (Clustered gentian).